The sequence spans 269 residues: Ubiquinone/menaquinone biosynthesis C-methyltransferase UbiE (269 aa).

Residues T92, D113, and 141–142 each bind S-adenosyl-L-methionine; that span reads NA.

The protein belongs to the class I-like SAM-binding methyltransferase superfamily. MenG/UbiE family.

The enzyme catalyses a 2-demethylmenaquinol + S-adenosyl-L-methionine = a menaquinol + S-adenosyl-L-homocysteine + H(+). It catalyses the reaction a 2-methoxy-6-(all-trans-polyprenyl)benzene-1,4-diol + S-adenosyl-L-methionine = a 5-methoxy-2-methyl-3-(all-trans-polyprenyl)benzene-1,4-diol + S-adenosyl-L-homocysteine + H(+). Its pathway is quinol/quinone metabolism; menaquinone biosynthesis; menaquinol from 1,4-dihydroxy-2-naphthoate: step 2/2. The protein operates within cofactor biosynthesis; ubiquinone biosynthesis. In terms of biological role, methyltransferase required for the conversion of demethylmenaquinol (DMKH2) to menaquinol (MKH2) and the conversion of 2-polyprenyl-6-methoxy-1,4-benzoquinol (DDMQH2) to 2-polyprenyl-3-methyl-6-methoxy-1,4-benzoquinol (DMQH2). This chain is Ubiquinone/menaquinone biosynthesis C-methyltransferase UbiE, found in Brucella suis (strain ATCC 23445 / NCTC 10510).